The sequence spans 433 residues: MSFTVTKTAPALITPSEPTPSGHILPLSFFDRLPFLRVFLVDMIMVYGRGDQPAKVIKEAVAKALVHYYPLAGRLTTDTDDGELSVACTGEGVWFVEATADCRMEDVNYLQVEPLMIPKEQMLPSHPEGVDPYTLPLMIQVTQFRCGGFAFATRANHAVFDGIGAGQIKVAIGEMARGLKHPTVKPVWCRDVIRKPIPSQISATEPHDTDLSPVSDIKFTNNQTNIECCSFDLSLDHINHLKDRFAKEVGKICSVFDVITAKLWQSRTRAIGLQPQTEVSLTFLLNIRQVVLHNELPPDGGYYGNCLVPLVNKAPSGQIANAPLFEIVRLIKEAKDDLLRKDSASLIGGMPPYKKPSYADLSIVDWRRLGLYEADFGWGGPMFLVPLNEHTVTSCSTYLFKSPVASKKDVCLVTYCIVKEHLEAFRAEMNDFT.

Catalysis depends on proton acceptor residues H157 and D375.

Belongs to the plant acyltransferase family. Expressed in young cromes.

It catalyses the reaction myricetin 3-O-[beta-D-glucosyl-(1-&gt;2)-alpha-L-rhamnoside] + (E)-caffeoyl-CoA = myricetin 3-O-[(6-O-(E)-caffeoyl-beta-D-glucosyl)-(1-&gt;2)-alpha-L-rhamnoside] + CoA. It functions in the pathway flavonoid metabolism. Functionally, caffeoyltransferase involved in montbretin A (MbA) biosynthesis. Catalyzes the caffeoylation of myricetin 3-O-beta-D-glucosyl 1,2-alpha-L-rhamnoside (MRG) to produce myricetin 3-O-(6'-O-caffeoyl)-beta-D-glucosyl 1,2-alpha-L-rhamnoside (mini-MbA), a precursor of MbA. Mini-MbA and MbA are potent inhibitors of human pancreatic alpha-amylase and are being developed as drug candidates to treat type-2 diabetes. In vitro, is able to catalyze the caffeoylation of quercetin 3-O-sophoroside (QGG), although QGG may not be a physiological substrate in vivo. In vitro, can use coumaryl-CoA, feruloyl-CoA and acetyl-CoA, although these three acyl donors may not be physiological in vivo. The polypeptide is Myricetin 3-O-glucosyl 1,2-rhamnoside 6'-O-caffeoyltransferase AT1 (Crocosmia x crocosmiiflora (Montbretia)).